A 177-amino-acid polypeptide reads, in one-letter code: Ribosome maturation factor RimM (177 aa).

Residues 101-174 enclose the PRC barrel domain; it reads EGEFHLLDLV…WLLLTPPPGL (74 aa).

It belongs to the RimM family. As to quaternary structure, binds ribosomal protein uS19.

It localises to the cytoplasm. Its function is as follows. An accessory protein needed during the final step in the assembly of 30S ribosomal subunit, possibly for assembly of the head region. Essential for efficient processing of 16S rRNA. May be needed both before and after RbfA during the maturation of 16S rRNA. It has affinity for free ribosomal 30S subunits but not for 70S ribosomes. The polypeptide is Ribosome maturation factor RimM (Synechococcus sp. (strain CC9605)).